Reading from the N-terminus, the 161-residue chain is Endoribonuclease YbeY (161 aa).

Zn(2+) is bound by residues H120, H124, and D130.

The protein belongs to the endoribonuclease YbeY family. It depends on Zn(2+) as a cofactor.

It localises to the cytoplasm. Its function is as follows. Single strand-specific metallo-endoribonuclease involved in late-stage 70S ribosome quality control and in maturation of the 3' terminus of the 16S rRNA. This chain is Endoribonuclease YbeY, found in Chlamydia muridarum (strain MoPn / Nigg).